The sequence spans 162 residues: Peptide deformylase-like (162 aa).

This sequence belongs to the polypeptide deformylase family.

This Staphylococcus aureus (strain COL) protein is Peptide deformylase-like.